The following is a 425-amino-acid chain: Mothers against decapentaplegic homolog 3 (425 aa).

At Ser-2 the chain carries N-acetylserine. Thr-8 carries the phosphothreonine; by CDK2 and CDK4 modification. The MH1 domain occupies 10–136 (PIVKRLLGWK…YQRVETPVLP (127 aa)). Lys-33 is covalently cross-linked (Glycyl lysine isopeptide (Lys-Gly) (interchain with G-Cter in ubiquitin)). Cys-64 contributes to the Zn(2+) binding site. Lys-81 participates in a covalent cross-link: Glycyl lysine isopeptide (Lys-Gly) (interchain with G-Cter in ubiquitin). Positions 109, 121, and 126 each coordinate Zn(2+). Residues 137–231 (PVLVPRHTEI…QPVTYCEPAF (95 aa)) are linker. Positions 165–177 (NFPAGIEPQSNIP) are enriched in polar residues. A disordered region spans residues 165-208 (NFPAGIEPQSNIPETPPPGYLSEDGETSDHQMNHSMDAGSPNLS). A Phosphothreonine; by CDK2, CDK4 and MAPK modification is found at Thr-179. Ser-204 carries the post-translational modification Phosphoserine; by GSK3 and MAPK. Ser-208 is modified (phosphoserine; by MAPK). Residue Ser-213 is modified to Phosphoserine; by CDK2 and CDK4. In terms of domain architecture, MH2 spans 232–425 (WCSISYYELN…SPSIRCSSVS (194 aa)). Residues 271–324 (LGLLSNVNRNAAVELTRRHIGRGVRLYYIGGEVFAECLSDSAIFVQSPNCNQRY) are sufficient for interaction with XPO4. Residue Lys-378 is modified to N6-acetyllysine. Ser-416 carries the phosphoserine modification. Ser-418 is modified (phosphoserine; by CK1). 3 positions are modified to phosphoserine; by TGFBR1: Ser-422, Ser-423, and Ser-425.

It belongs to the dwarfin/SMAD family. As to quaternary structure, monomer; in the absence of TGF-beta. Homooligomer; in the presence of TGF-beta. Heterotrimer; forms a heterotrimer in the presence of TGF-beta consisting of two molecules of C-terminally phosphorylated SMAD2 or SMAD3 and one of SMAD4 to form the transcriptionally active SMAD2/SMAD3-SMAD4 complex. Part of a complex consisting of MAGI2/ARIP1, ACVR2A, ACVR1B and SMAD3. Forms a complex with SMAD2 and TRIM33 upon addition of TGF-beta. Found in a complex composed of SMAD3, RAN and XPO4; within the complex interacts directly with XPO4. Component of the multimeric complex SMAD3/SMAD4/JUN/FOS which forms at the AP1 promoter site; required for synergistic transcriptional activity in response to TGF-beta. Part of a ternary complex composed of SMAD3, ITCH/AIP4 and NEDD9/HEF1; within the complex NEDD9/HEF1 interacts (via N-terminus) with ITCH/AIP4; the complex mediates ubiquitination and proteasomal degradation of NEDD9/HEF1. Interacts with NEDD9; the interaction promotes NEDD9 ubiquitination and proteasomal degradation. Interacts (via an N-terminal domain) with JUN (via its basic DNA binding and leucine zipper domains); this interaction is essential for DNA binding and cooperative transcriptional activity in response to TGF-beta. Identified in a complex that contains at least ZNF451, SMAD2, SMAD3 and SMAD4. Interacts with PPM1A; the interaction dephosphorylates SMAD3 in the C-terminal SXS motif leading to disruption of the SMAD2/3-SMAD4 complex, nuclear export and termination of TGF-beta signaling. Interacts (via MH2 domain) with ZMIZ1 (via SP-RING-type domain); in the TGF-beta signaling pathway increases the activity of the SMAD3/SMAD4 transcriptional complex. Interacts (when phosphorylated) with RNF111; RNF111 acts as an enhancer of the transcriptional responses by mediating ubiquitination and degradation of SMAD3 inhibitors. Interacts (dephosphorylated form via the MH1 and MH2 domains) with RANBP3 (via its C-terminal R domain); the interaction results in the export of dephosphorylated SMAD3 out of the nucleus and termination of the TGF-beta signaling. Interacts (via MH2 domain) with LEMD3; the interaction represses SMAD3 transcriptional activity through preventing the formation of the heteromeric complex with SMAD4 and translocation to the nucleus. Interacts (via the linker region) with EP300 (C-terminal); the interaction promotes SMAD3 acetylation and is enhanced by TGF-beta phosphorylation in the C-terminal of SMAD3. This interaction can be blocked by competitive binding of adenovirus oncoprotein E1A to the same C-terminal site on EP300, which then results in partially inhibited SMAD3/SMAD4 transcriptional activity. Interacts with TGFBR1. Interacts with TGFB1I1. Interacts with PRDM16. Interacts with SNW1. Interacts (via MH2 domain) with ZFYVE9. Interacts with HDAC1. Interacts with TGIF2. Interacts with SKOR1. Interacts with SKOR2. Interacts with DACH1; the interaction inhibits the TGF-beta signaling. Interacts with RBPMS. Interacts (via MH2 domain) with MECOM. Interacts with WWTR1 (via its coiled-coil domain). Interacts with SKI; the interaction represses SMAD3 transcriptional activity. Interacts with MEN1. Interacts with IL1F7. Interaction with CSNK1G2. Interacts with PDPK1 (via PH domain). Interacts with DAB2; the interactions are enhanced upon TGF-beta stimulation. Interacts with USP15. Interacts with PPP5C; the interaction decreases SMAD3 phosphorylation and protein levels. Interacts with LDLRAD4 (via the SMAD interaction motif). Interacts with PMEPA1. Interacts with ZNF451. Interacts with ZFHX3. Interacts weakly with ZNF8. Interacts with STUB1, HSPA1A, HSPA1B, HSP90AA1 and HSP90AB1. Interacts with YAP1 (when phosphorylated at 'Ser-55'). Interacts with MAGI2/ARIP1. Interacts (via MH2 domain) with CITED2 (via C-terminus). Interacts with HGS. Interacts with WWP1. Interacts with TTRAP. Interacts with FOXL2. Interacts with PML. Interacts with NEDD4L; the interaction requires TGF-beta stimulation. Interacts with ZC3H3. Interacts with TGIF. Interacts with CREBBP. Interacts with ATF2. Interacts with NEDD9; the interaction is inhibited by oxidation of NEDD9. Interacts with MTMR4; negatively regulates TGF-beta signaling through SMAD3 dephosphorylation and retention in endosomes. In terms of processing, phosphorylated on serine and threonine residues. Enhanced phosphorylation in the linker region on Thr-179, Ser-204 and Ser-208 on EGF and TGF-beta treatment. Ser-208 is the main site of MAPK-mediated phosphorylation. CDK-mediated phosphorylation occurs in a cell-cycle dependent manner and inhibits both the transcriptional activity and antiproliferative functions of SMAD3. This phosphorylation is inhibited by flavopiridol. Maximum phosphorylation at the G(1)/S junction. Also phosphorylated on serine residues in the C-terminal SXS motif by TGFBR1 and ACVR1. TGFBR1-mediated phosphorylation at these C-terminal sites is required for interaction with SMAD4, nuclear location and transactivational activity, and appears to be a prerequisite for the TGF-beta mediated phosphorylation in the linker region. Dephosphorylated in the C-terminal SXS motif by PPM1A. This dephosphorylation disrupts the interaction with SMAD4, promotes nuclear export and terminates TGF-beta-mediated signaling. Phosphorylation at Ser-418 by CSNK1G2/CK1 promotes ligand-dependent ubiquitination and subsequent proteasome degradation, thus inhibiting SMAD3-mediated TGF-beta responses. Phosphorylated by PDPK1. Acetylation in the nucleus by EP300 in the MH2 domain regulates positively its transcriptional activity and is enhanced by TGF-beta. Post-translationally, poly-ADP-ribosylated by PARP1 and PARP2. ADP-ribosylation negatively regulates SMAD3 transcriptional responses during the course of TGF-beta signaling. In terms of processing, ubiquitinated. Monoubiquitinated, leading to prevent DNA-binding. Deubiquitination by USP15 alleviates inhibition and promotes activation of TGF-beta target genes. Ubiquitinated by RNF111, leading to its degradation: only SMAD3 proteins that are 'in use' are targeted by RNF111, RNF111 playing a key role in activating SMAD3 and regulating its turnover. Undergoes STUB1-mediated ubiquitination and degradation. In terms of tissue distribution, highly expressed in the brain and ovary. Detected in the pyramidal cells of the hippocampus, granule cells of the dentate gyrus, granular cells of the cerebral cortex and the granulosa cells of the ovary.

The protein localises to the cytoplasm. Its subcellular location is the nucleus. Its function is as follows. Receptor-regulated SMAD (R-SMAD) that is an intracellular signal transducer and transcriptional modulator activated by TGF-beta (transforming growth factor) and activin type 1 receptor kinases. Binds the TRE element in the promoter region of many genes that are regulated by TGF-beta and, on formation of the SMAD3/SMAD4 complex, activates transcription. Also can form a SMAD3/SMAD4/JUN/FOS complex at the AP-1/SMAD site to regulate TGF-beta-mediated transcription. Has an inhibitory effect on wound healing probably by modulating both growth and migration of primary keratinocytes and by altering the TGF-mediated chemotaxis of monocytes. This effect on wound healing appears to be hormone-sensitive. Regulator of chondrogenesis and osteogenesis and inhibits early healing of bone fractures. Positively regulates PDPK1 kinase activity by stimulating its dissociation from the 14-3-3 protein YWHAQ which acts as a negative regulator. This Sus scrofa (Pig) protein is Mothers against decapentaplegic homolog 3 (SMAD3).